The chain runs to 512 residues: GMP synthase [glutamine-hydrolyzing] (512 aa).

The region spanning 7–197 is the Glutamine amidotransferase type-1 domain; sequence TIIVLDFGSQ…VFGVCGCSEG (191 aa). Cysteine 84 (nucleophile) is an active-site residue. Active-site residues include histidine 171 and glutamate 173. Positions 198–387 constitute a GMPS ATP-PPase domain; that stretch reads WNMENFIEVE…LGIPDEIVWR (190 aa). 225–231 serves as a coordination point for ATP; sequence SGGVDSS.

In terms of assembly, homodimer.

The catalysed reaction is XMP + L-glutamine + ATP + H2O = GMP + L-glutamate + AMP + diphosphate + 2 H(+). It participates in purine metabolism; GMP biosynthesis; GMP from XMP (L-Gln route): step 1/1. Its function is as follows. Catalyzes the synthesis of GMP from XMP. This is GMP synthase [glutamine-hydrolyzing] from Bacillus mycoides (strain KBAB4) (Bacillus weihenstephanensis).